We begin with the raw amino-acid sequence, 302 residues long: UTP--glucose-1-phosphate uridylyltransferase (302 aa).

The protein belongs to the UDPGP type 2 family. As to quaternary structure, homotetramer or homopentamer. Mg(2+) serves as cofactor.

The enzyme catalyses alpha-D-glucose 1-phosphate + UTP + H(+) = UDP-alpha-D-glucose + diphosphate. In terms of biological role, may play a role in stationary phase survival. The protein is UTP--glucose-1-phosphate uridylyltransferase (galU) of Escherichia coli O157:H7.